A 92-amino-acid chain; its full sequence is Alpha-conotoxin-like Rt20.1 (92 aa).

The signal sequence occupies residues 1 to 24 (MPKLEMMLLVLLILPLSYFSAAGG). Residues 25–45 (QVVQGDLRSDVLARYLQRGDR) constitute a propeptide that is removed on maturation. Position 49 is a 4-carboxyglutamate (Glu-49). 4-hydroxyproline is present on Pro-55. 4 cysteine pairs are disulfide-bonded: Cys-63–Cys-72, Cys-68–Cys-80, Cys-73–Cys-90, and Cys-78–Cys-92.

Belongs to the conotoxin D superfamily. As to quaternary structure, hetero-, homo- or pseudo-homodimer (identical sequence, different post-translational modifications). Expressed by the venom duct.

The protein resides in the secreted. Alpha-conotoxins act on postsynaptic membranes, they bind to the nicotinic acetylcholine receptors (nAChR) and thus inhibit them. Through its two C-terminal domains, this homodimeric protein would bind to two nAChR allosteric sites, located outside the nAChR C-loop of the principal binding face and at the adjacent binding interface in a clockwise direction. This toxin specifically blocks mammalian neuronal nAChR of the alpha-7/CHRNA7, alpha-3-beta-2/CHRNA3-CHRNB2 and alpha-4-beta-2/CHRNA4-CHRNB2 subtypes. In Conus rattus (Rat cone), this protein is Alpha-conotoxin-like Rt20.1.